A 322-amino-acid polypeptide reads, in one-letter code: Porphobilinogen deaminase (322 aa).

C252 carries the S-(dipyrrolylmethanemethyl)cysteine modification.

It belongs to the HMBS family. As to quaternary structure, monomer. It depends on dipyrromethane as a cofactor.

It carries out the reaction 4 porphobilinogen + H2O = hydroxymethylbilane + 4 NH4(+). It functions in the pathway porphyrin-containing compound metabolism; protoporphyrin-IX biosynthesis; coproporphyrinogen-III from 5-aminolevulinate: step 2/4. Tetrapolymerization of the monopyrrole PBG into the hydroxymethylbilane pre-uroporphyrinogen in several discrete steps. The protein is Porphobilinogen deaminase of Caulobacter vibrioides (strain ATCC 19089 / CIP 103742 / CB 15) (Caulobacter crescentus).